A 216-amino-acid polypeptide reads, in one-letter code: Ribosomal RNA small subunit methyltransferase G (216 aa).

Residues G86, L91, 137 to 138 (VE), and R155 each bind S-adenosyl-L-methionine.

It belongs to the methyltransferase superfamily. RNA methyltransferase RsmG family.

Its subcellular location is the cytoplasm. It catalyses the reaction guanosine(527) in 16S rRNA + S-adenosyl-L-methionine = N(7)-methylguanosine(527) in 16S rRNA + S-adenosyl-L-homocysteine. Functionally, specifically methylates the N7 position of guanine in position 527 of 16S rRNA. This is Ribosomal RNA small subunit methyltransferase G from Lawsonia intracellularis (strain PHE/MN1-00).